The chain runs to 276 residues: Large ribosomal subunit protein uL2c (276 aa).

The interval 225 to 256 (NPVDHPHGGGEGRSPIGRPKPVSPWGKTALGA) is disordered.

This sequence belongs to the universal ribosomal protein uL2 family. Part of the 50S ribosomal subunit.

The protein localises to the plastid. It is found in the chloroplast. The protein is Large ribosomal subunit protein uL2c (rpl2) of Mesostigma viride (Green alga).